A 473-amino-acid polypeptide reads, in one-letter code: MNINMKDNFKKWLDLQQKKTLLKFLTCGSVDDGKSTLIGRLLHDTKQIYDDQLFFLKSDSKRHGTQGNEIDLALVVDGLQSEREQGITIDVAYRYFSTNKRKFIIADTPGHEQYTRNMATGASTCDLSILLVDARKGLSEQTYRHSFISTLLGIKYLIVAINKMDLVNYKQEIFENIKKDFLIFSKKLANDLNIIFIPMSALLGENIVFKTKLMPWYQGVTLLSFLETIKIKNSISSEELRFPVQYINRPNSDFRGYSGILLSGRMHVGQTIKILPENINSRVSRIVTFDKELKKAEIGESITVVLKDEIDINRGDFFVNIDSILQPSQEAIIDIVWMTDNILLAGESYNVKLSGKKIRVYIKEILFRLDVNTLKKVKSHSLVLNSIGRVKIYFSKPVIFDNYSENRMTGNMIFIDLLTNITVGAGMIVNSLDKKGKIPSNKQKDFESDFYDLIIRHFPHWNIPKILMKKVYK.

Positions 19–238 constitute a tr-type G domain; the sequence is KTLLKFLTCG…IKIKNSISSE (220 aa). The interval 28–35 is G1; the sequence is GSVDDGKS. 28 to 35 is a binding site for GTP; sequence GSVDDGKS. The G2 stretch occupies residues 86–90; that stretch reads GITID. The segment at 107–110 is G3; sequence DTPG. GTP-binding positions include 107–111 and 162–165; these read DTPGH and NKMD. Residues 162–165 form a G4 region; the sequence is NKMD. The G5 stretch occupies residues 200–202; it reads SAL.

It belongs to the TRAFAC class translation factor GTPase superfamily. Classic translation factor GTPase family. CysN/NodQ subfamily. In terms of assembly, heterodimer composed of CysD, the smaller subunit, and CysN.

It catalyses the reaction sulfate + ATP + H(+) = adenosine 5'-phosphosulfate + diphosphate. It functions in the pathway sulfur metabolism; hydrogen sulfide biosynthesis; sulfite from sulfate: step 1/3. In terms of biological role, with CysD forms the ATP sulfurylase (ATPS) that catalyzes the adenylation of sulfate producing adenosine 5'-phosphosulfate (APS) and diphosphate, the first enzymatic step in sulfur assimilation pathway. APS synthesis involves the formation of a high-energy phosphoric-sulfuric acid anhydride bond driven by GTP hydrolysis by CysN coupled to ATP hydrolysis by CysD. The chain is Sulfate adenylyltransferase subunit 1 from Buchnera aphidicola subsp. Acyrthosiphon pisum (strain Tuc7).